The primary structure comprises 379 residues: Origin of replication complex subunit 2 (379 aa).

Residues 1–25 (MALRGGHAAAAAGVSSGSEDDDEEA) form a disordered region. Positions 8-17 (AAAAAGVSSG) are enriched in low complexity.

This sequence belongs to the ORC2 family. In terms of assembly, component of the origin recognition complex (ORC) composed of at least ORC1, ORC2, ORC3, ORC4, ORC5 and ORC6. ORC is regulated in a cell-cycle and development dependent manner. It is sequentially assembled at the exit from anaphase of mitosis and disassembled as cells enter S phase.

Its subcellular location is the nucleus. In terms of biological role, essential protein. Component of the origin recognition complex (ORC) that binds origins of replication. DNA-binding is ATP-dependent, however specific DNA sequences that define origins of replication have not been identified so far. ORC is required to assemble the pre-replication complex necessary to initiate DNA replication. The sequence is that of Origin of replication complex subunit 2 from Oryza sativa subsp. indica (Rice).